The following is a 140-amino-acid chain: Putative esterase MT1895 (140 aa).

The protein belongs to the thioesterase PaaI family.

This Mycobacterium tuberculosis (strain CDC 1551 / Oshkosh) protein is Putative esterase MT1895.